Consider the following 272-residue polypeptide: MADS-box transcription factor 58 (272 aa).

Residues 1–41 (MHIYKEQEAEPSTGLMMPEPAPVASPGSGGSGGSGSVGAEK) form a disordered region. The segment covering 27–36 (GSGGSGGSGS) has biased composition (gly residues). An MADS-box domain is found at 43–103 (GSRGKIEIKR…GRLYEYSNNS (61 aa)). Residues 129–219 (AQHYQQEAAK…KSKVAESERG (91 aa)) enclose the K-box domain.

Expressed in the lodicule, stamen carpel and ovule primordia.

The protein resides in the nucleus. Probable transcription factor involved in the development of floral organs. Acts as a C-class protein in association with MADS3. Involved in the control of lodicule number (whorl 2), stamen specification (whorl 3), floral meristem determinacy and regulation of the carpel morphogenesis (whorl 4). Plays a more predominant role in floral meristem determinacy than MADS3. This chain is MADS-box transcription factor 58 (MADS58), found in Oryza sativa subsp. japonica (Rice).